The primary structure comprises 189 residues: Glucose-6-phosphate isomerase (189 aa).

Fe cation is bound by residues His-88, His-90, Glu-97, and His-136.

This sequence belongs to the archaeal-type GPI family. In terms of assembly, homodimer.

Its subcellular location is the cytoplasm. It carries out the reaction alpha-D-glucose 6-phosphate = beta-D-fructose 6-phosphate. It functions in the pathway carbohydrate degradation; glycolysis; D-glyceraldehyde 3-phosphate and glycerone phosphate from D-glucose: step 2/4. This Thermococcus gammatolerans (strain DSM 15229 / JCM 11827 / EJ3) protein is Glucose-6-phosphate isomerase.